The chain runs to 82 residues: Conotoxin MiK42 (82 aa).

The N-terminal stretch at 1 to 22 is a signal peptide; it reads MKLTCALIVAMLLLTACQLITT. The propeptide occupies 23-49; that stretch reads DDFRGRQQYRTARSRTKMQNYKIFRLT. Intrachain disulfides connect C52–C67, C59–C70, and C66–C80.

Belongs to the conotoxin O1 superfamily. Expressed by the venom duct.

The protein localises to the secreted. The chain is Conotoxin MiK42 from Conus miles (Soldier cone).